A 117-amino-acid polypeptide reads, in one-letter code: Large ribosomal subunit protein bL20 (117 aa).

Belongs to the bacterial ribosomal protein bL20 family.

Binds directly to 23S ribosomal RNA and is necessary for the in vitro assembly process of the 50S ribosomal subunit. It is not involved in the protein synthesizing functions of that subunit. The polypeptide is Large ribosomal subunit protein bL20 (Rickettsia felis (strain ATCC VR-1525 / URRWXCal2) (Rickettsia azadi)).